The following is a 301-amino-acid chain: Phosphatidylserine decarboxylase proenzyme (301 aa).

Catalysis depends on charge relay system; for autoendoproteolytic cleavage activity residues D115, H171, and S258. Residue S258 is the Schiff-base intermediate with substrate; via pyruvic acid; for decarboxylase activity of the active site. Pyruvic acid (Ser); by autocatalysis is present on S258.

Belongs to the phosphatidylserine decarboxylase family. PSD-B subfamily. Prokaryotic type II sub-subfamily. As to quaternary structure, heterodimer of a large membrane-associated beta subunit and a small pyruvoyl-containing alpha subunit. Requires pyruvate as cofactor. Post-translationally, is synthesized initially as an inactive proenzyme. Formation of the active enzyme involves a self-maturation process in which the active site pyruvoyl group is generated from an internal serine residue via an autocatalytic post-translational modification. Two non-identical subunits are generated from the proenzyme in this reaction, and the pyruvate is formed at the N-terminus of the alpha chain, which is derived from the carboxyl end of the proenzyme. The autoendoproteolytic cleavage occurs by a canonical serine protease mechanism, in which the side chain hydroxyl group of the serine supplies its oxygen atom to form the C-terminus of the beta chain, while the remainder of the serine residue undergoes an oxidative deamination to produce ammonia and the pyruvoyl prosthetic group on the alpha chain. During this reaction, the Ser that is part of the protease active site of the proenzyme becomes the pyruvoyl prosthetic group, which constitutes an essential element of the active site of the mature decarboxylase.

Its subcellular location is the cell membrane. The catalysed reaction is a 1,2-diacyl-sn-glycero-3-phospho-L-serine + H(+) = a 1,2-diacyl-sn-glycero-3-phosphoethanolamine + CO2. It participates in phospholipid metabolism; phosphatidylethanolamine biosynthesis; phosphatidylethanolamine from CDP-diacylglycerol: step 2/2. Its function is as follows. Catalyzes the formation of phosphatidylethanolamine (PtdEtn) from phosphatidylserine (PtdSer). The chain is Phosphatidylserine decarboxylase proenzyme from Chlamydia pneumoniae (Chlamydophila pneumoniae).